Reading from the N-terminus, the 462-residue chain is Trigger factor (462 aa).

One can recognise a PPIase FKBP-type domain in the interval 172–257 (GDKATIDFVG…LKALAAPGET (86 aa)). The segment at 443–462 (LLAADEEDEEEAAESSAALV) is disordered. Positions 444–455 (LAADEEDEEEAA) are enriched in acidic residues.

Belongs to the FKBP-type PPIase family. Tig subfamily.

It is found in the cytoplasm. It catalyses the reaction [protein]-peptidylproline (omega=180) = [protein]-peptidylproline (omega=0). In terms of biological role, involved in protein export. Acts as a chaperone by maintaining the newly synthesized protein in an open conformation. Functions as a peptidyl-prolyl cis-trans isomerase. This Methylocella silvestris (strain DSM 15510 / CIP 108128 / LMG 27833 / NCIMB 13906 / BL2) protein is Trigger factor.